Consider the following 236-residue polypeptide: 2-C-methyl-D-erythritol 4-phosphate cytidylyltransferase (236 aa).

This sequence belongs to the IspD/TarI cytidylyltransferase family. IspD subfamily.

The enzyme catalyses 2-C-methyl-D-erythritol 4-phosphate + CTP + H(+) = 4-CDP-2-C-methyl-D-erythritol + diphosphate. It functions in the pathway isoprenoid biosynthesis; isopentenyl diphosphate biosynthesis via DXP pathway; isopentenyl diphosphate from 1-deoxy-D-xylulose 5-phosphate: step 2/6. Functionally, catalyzes the formation of 4-diphosphocytidyl-2-C-methyl-D-erythritol from CTP and 2-C-methyl-D-erythritol 4-phosphate (MEP). This chain is 2-C-methyl-D-erythritol 4-phosphate cytidylyltransferase, found in Pseudomonas syringae pv. syringae (strain B728a).